A 275-amino-acid chain; its full sequence is 4-hydroxy-3-methylbut-2-enyl diphosphate reductase (275 aa).

Cys-12 serves as a coordination point for [4Fe-4S] cluster. The (2E)-4-hydroxy-3-methylbut-2-enyl diphosphate site is built by His-36 and His-70. His-36 and His-70 together coordinate dimethylallyl diphosphate. Residues His-36 and His-70 each coordinate isopentenyl diphosphate. Cys-92 contributes to the [4Fe-4S] cluster binding site. Residue His-120 participates in (2E)-4-hydroxy-3-methylbut-2-enyl diphosphate binding. His-120 is a dimethylallyl diphosphate binding site. His-120 is a binding site for isopentenyl diphosphate. Catalysis depends on Glu-122, which acts as the Proton donor. Thr-158 contributes to the (2E)-4-hydroxy-3-methylbut-2-enyl diphosphate binding site. Residue Cys-186 participates in [4Fe-4S] cluster binding. Residues Ser-214, Ser-215, Asn-216, and Ser-258 each coordinate (2E)-4-hydroxy-3-methylbut-2-enyl diphosphate. The dimethylallyl diphosphate site is built by Ser-214, Ser-215, Asn-216, and Ser-258. Isopentenyl diphosphate-binding residues include Ser-214, Ser-215, Asn-216, and Ser-258.

Belongs to the IspH family. Requires [4Fe-4S] cluster as cofactor.

The catalysed reaction is isopentenyl diphosphate + 2 oxidized [2Fe-2S]-[ferredoxin] + H2O = (2E)-4-hydroxy-3-methylbut-2-enyl diphosphate + 2 reduced [2Fe-2S]-[ferredoxin] + 2 H(+). It catalyses the reaction dimethylallyl diphosphate + 2 oxidized [2Fe-2S]-[ferredoxin] + H2O = (2E)-4-hydroxy-3-methylbut-2-enyl diphosphate + 2 reduced [2Fe-2S]-[ferredoxin] + 2 H(+). It participates in isoprenoid biosynthesis; dimethylallyl diphosphate biosynthesis; dimethylallyl diphosphate from (2E)-4-hydroxy-3-methylbutenyl diphosphate: step 1/1. The protein operates within isoprenoid biosynthesis; isopentenyl diphosphate biosynthesis via DXP pathway; isopentenyl diphosphate from 1-deoxy-D-xylulose 5-phosphate: step 6/6. Its function is as follows. Catalyzes the conversion of 1-hydroxy-2-methyl-2-(E)-butenyl 4-diphosphate (HMBPP) into a mixture of isopentenyl diphosphate (IPP) and dimethylallyl diphosphate (DMAPP). Acts in the terminal step of the DOXP/MEP pathway for isoprenoid precursor biosynthesis. This is 4-hydroxy-3-methylbut-2-enyl diphosphate reductase from Campylobacter hominis (strain ATCC BAA-381 / DSM 21671 / CCUG 45161 / LMG 19568 / NCTC 13146 / CH001A).